Consider the following 1394-residue polypeptide: DNA-directed RNA polymerase subunit beta' (1394 aa).

Zn(2+) contacts are provided by Cys-70, Cys-72, Cys-85, and Cys-88. Mg(2+)-binding residues include Asp-470, Asp-472, and Asp-474. Zn(2+) is bound by residues Cys-815, Cys-889, Cys-896, and Cys-899.

Belongs to the RNA polymerase beta' chain family. In terms of assembly, the RNAP catalytic core consists of 2 alpha, 1 beta, 1 beta' and 1 omega subunit. When a sigma factor is associated with the core the holoenzyme is formed, which can initiate transcription. Requires Mg(2+) as cofactor. The cofactor is Zn(2+).

The enzyme catalyses RNA(n) + a ribonucleoside 5'-triphosphate = RNA(n+1) + diphosphate. In terms of biological role, DNA-dependent RNA polymerase catalyzes the transcription of DNA into RNA using the four ribonucleoside triphosphates as substrates. This Anaeromyxobacter dehalogenans (strain 2CP-C) protein is DNA-directed RNA polymerase subunit beta'.